Consider the following 434-residue polypeptide: GTPase Der (434 aa).

2 consecutive EngA-type G domains span residues 3 to 167 (NIVA…PEIE) and 175 to 350 (PRFA…ESRS). GTP contacts are provided by residues 9 to 16 (GRPNVGKS), 56 to 60 (DTGGY), 119 to 122 (NKVD), 181 to 188 (GRPNAGKS), 228 to 232 (DTAGI), and 293 to 296 (NKWD). The KH-like domain maps to 351 to 434 (KKIKTRQFND…VPISIFFRKK (84 aa)).

The protein belongs to the TRAFAC class TrmE-Era-EngA-EngB-Septin-like GTPase superfamily. EngA (Der) GTPase family. Associates with the 50S ribosomal subunit.

GTPase that plays an essential role in the late steps of ribosome biogenesis. In Christiangramia forsetii (strain DSM 17595 / CGMCC 1.15422 / KT0803) (Gramella forsetii), this protein is GTPase Der.